The primary structure comprises 483 residues: Homoserine O-acetyltransferase (483 aa).

One can recognise an AB hydrolase-1 domain in the interval 47–346 (NVILICHALT…HFGHDAFLLE (300 aa)). Ser152 acts as the Nucleophile in catalysis. Substrate is bound at residue Arg221. Residues Asp307 and His340 contribute to the active site. Asp341 is a substrate binding site. 2 consecutive CBS domains span residues 367 to 423 (MSED…KISS) and 428 to 483 (LSRD…KGTK).

The protein belongs to the AB hydrolase superfamily. MetX family. As to quaternary structure, homodimer.

The protein resides in the cytoplasm. The catalysed reaction is L-homoserine + acetyl-CoA = O-acetyl-L-homoserine + CoA. It participates in amino-acid biosynthesis; L-methionine biosynthesis via de novo pathway; O-acetyl-L-homoserine from L-homoserine: step 1/1. Transfers an acetyl group from acetyl-CoA to L-homoserine, forming acetyl-L-homoserine. This is Homoserine O-acetyltransferase from Methanohalophilus mahii (strain ATCC 35705 / DSM 5219 / SLP).